We begin with the raw amino-acid sequence, 396 residues long: Protein NDRG1-B (396 aa).

The tract at residues 326-396 (RSRTGSAASS…NTPKSMEVSC (71 aa)) is disordered. Positions 327–340 (SRTGSAASSSSQDG) are enriched in low complexity. Repeat copies occupy residues 340–349 (GNRSRSHTNE), 350–359 (GSRSRSQTGD), 360–369 (GNRSRAHTGD), and 370–379 (GNRSRSHTDT). The tract at residues 340 to 379 (GNRSRSHTNEGSRSRSQTGDGNRSRAHTGDGNRSRSHTDT) is 4 X 10 AA tandem repeats of G-[NS]-R-S-R-[AS]-[HQ]-T-[DGN]-[DET]. Residues 366-377 (HTGDGNRSRSHT) show a composition bias toward basic and acidic residues. The span at 378–390 (DTNNVNSDHNTPK) shows a compositional bias: polar residues.

The protein belongs to the NDRG family.

Functionally, may be involved in pronephros development, after specification of the pronephros. This chain is Protein NDRG1-B (ndrg1-b), found in Xenopus laevis (African clawed frog).